Reading from the N-terminus, the 438-residue chain is GTPase Der (438 aa).

2 EngA-type G domains span residues 4–169 (PVVA…PEKG) and 178–353 (IDVA…DQNS). Residues 10 to 17 (GRPNVGKS), 57 to 61 (DTGGI), 120 to 123 (NKVD), 184 to 191 (GKPNVGKS), 231 to 235 (DTAGL), and 296 to 299 (NKWD) each bind GTP. One can recognise a KH-like domain in the interval 354 to 438 (RRVKTGLLNE…PIRLKFKQKT (85 aa)).

It belongs to the TRAFAC class TrmE-Era-EngA-EngB-Septin-like GTPase superfamily. EngA (Der) GTPase family. In terms of assembly, associates with the 50S ribosomal subunit.

Functionally, GTPase that plays an essential role in the late steps of ribosome biogenesis. In Halothermothrix orenii (strain H 168 / OCM 544 / DSM 9562), this protein is GTPase Der.